We begin with the raw amino-acid sequence, 149 residues long: Large ribosomal subunit protein uL13 (149 aa).

This sequence belongs to the universal ribosomal protein uL13 family. As to quaternary structure, part of the 50S ribosomal subunit.

This protein is one of the early assembly proteins of the 50S ribosomal subunit, although it is not seen to bind rRNA by itself. It is important during the early stages of 50S assembly. The protein is Large ribosomal subunit protein uL13 of Thermosipho africanus (strain TCF52B).